The primary structure comprises 77 residues: Conotoxin ArMKLT2-022 (77 aa).

Residues 1–22 (MKLTCVLIVAVLFLTACQLIAA) form the signal peptide. Positions 23 to 46 (DDSRDLKRFSRRKMRDGMLNTKNT) are excised as a propeptide. Q49 is subject to Pyrrolidone carboxylic acid. 3 cysteine pairs are disulfide-bonded: C50–C65, C57–C68, and C64–C73.

Belongs to the conotoxin O1 superfamily. Expressed by the venom duct.

The protein localises to the secreted. In Conus arenatus (Sand-dusted cone), this protein is Conotoxin ArMKLT2-022.